Here is a 425-residue protein sequence, read N- to C-terminus: Serine--tRNA ligase (425 aa).

231-233 (TAE) is an L-serine binding site. Residue 262-264 (RSE) coordinates ATP. Residue glutamate 285 participates in L-serine binding. 349-352 (EISS) contacts ATP. An L-serine-binding site is contributed by serine 385.

The protein belongs to the class-II aminoacyl-tRNA synthetase family. Type-1 seryl-tRNA synthetase subfamily. As to quaternary structure, homodimer. The tRNA molecule binds across the dimer.

Its subcellular location is the cytoplasm. It carries out the reaction tRNA(Ser) + L-serine + ATP = L-seryl-tRNA(Ser) + AMP + diphosphate + H(+). The enzyme catalyses tRNA(Sec) + L-serine + ATP = L-seryl-tRNA(Sec) + AMP + diphosphate + H(+). It functions in the pathway aminoacyl-tRNA biosynthesis; selenocysteinyl-tRNA(Sec) biosynthesis; L-seryl-tRNA(Sec) from L-serine and tRNA(Sec): step 1/1. In terms of biological role, catalyzes the attachment of serine to tRNA(Ser). Is also able to aminoacylate tRNA(Sec) with serine, to form the misacylated tRNA L-seryl-tRNA(Sec), which will be further converted into selenocysteinyl-tRNA(Sec). This Bacillus subtilis (strain 168) protein is Serine--tRNA ligase.